Here is a 312-residue protein sequence, read N- to C-terminus: L-type lectin-like domain-containing protein C126.08c (312 aa).

A signal peptide spans 1–22 (MFFSVKNVFLLGIFGFVLGALA). The Extracellular segment spans residues 23–280 (ETSHLERLSL…QKKGSFKKRL (258 aa)). Residues 24 to 248 (TSHLERLSLE…EIASILSRTI (225 aa)) enclose the L-type lectin-like domain. Residues 281-301 (IILLLSLIVIFSIFALRSYQV) form a helical membrane-spanning segment. At 302–312 (QQEKNRRTTVL) the chain is on the cytoplasmic side.

The protein resides in the membrane. It localises to the endoplasmic reticulum. It is found in the golgi apparatus. The protein localises to the vacuole. The polypeptide is L-type lectin-like domain-containing protein C126.08c (Schizosaccharomyces pombe (strain 972 / ATCC 24843) (Fission yeast)).